An 817-amino-acid polypeptide reads, in one-letter code: Two pore calcium channel protein 1 (817 aa).

Over 1-113 the chain is Cytoplasmic; that stretch reads MAVSLDDDVP…VHNHFFYMME (113 aa). The segment at 20 to 65 is disordered; sequence SAPLPPSNSLGQEQLPSKNGGSHSIHNSQVPSLVSGADSPPSSPTG. Polar residues predominate over residues 26 to 51; sequence SNSLGQEQLPSKNGGSHSIHNSQVPS. The chain crosses the membrane as a helical span at residues 114–134; that stretch reads LLTALLLLLLSLCESPAVPVL. The Extracellular portion of the chain corresponds to 135–137; that stretch reads KLH. Residues 138-158 traverse the membrane as a helical segment; sequence TYVHATLELFALMVVVFELCM. Residues 159-172 are Cytoplasmic-facing; sequence KLRWLGFHTFVRHK. Residues 173–193 traverse the membrane as a helical segment; the sequence is RTMVKTSVLVVQFIEAIVVLV. The Extracellular portion of the chain corresponds to 194 to 202; it reads RQTSHVRVT. The helical transmembrane segment at 203–221 threads the bilayer; the sequence is RALRCIFLVDCRYCGGVRR. Residues 222–235 lie on the Cytoplasmic side of the membrane; that stretch reads NLRQIFQSLPPFMD. A helical transmembrane segment spans residues 236 to 256; sequence ILLLLLFFMIIFAILGFYLFS. Topologically, residues 257-263 are extracellular; it reads TNPSDPY. The helical; Pore-forming intramembrane region spans 264–287; it reads FSTLENSIVNLFVLLTTANFPDVM. The Extracellular portion of the chain corresponds to 288–298; that stretch reads MPSYSRNPWSC. The helical transmembrane segment at 299-319 threads the bilayer; that stretch reads VFFIVYLSIELYFIMNLLLAV. The Cytoplasmic portion of the chain corresponds to 320–445; that stretch reads VFDTFNDIEK…NILVNSKAFQ (126 aa). The helical transmembrane segment at 446 to 466 threads the bilayer; sequence YFMYLVVAVNGVWILVETFML. The Extracellular segment spans residues 467-480; sequence KGGNFTSKHVPWSY. Asn470 carries N-linked (GlcNAc...) asparagine glycosylation. A helical transmembrane segment spans residues 481–501; the sequence is LVFLTIYGVELFMKVAGLGPV. The Cytoplasmic portion of the chain corresponds to 502–504; the sequence is EYL. Residues 505–527 traverse the membrane as a helical segment; it reads SSGWNLFDFSVTAFAFLGLLALT. At 528–535 the chain is on the extracellular side; sequence LNMEPFYF. A helical membrane pass occupies residues 536–550; the sequence is IVVLRPLQLLRLFKL. At 551–569 the chain is on the cytoplasmic side; that stretch reads KKRYRNVLDTMFELLPRMA. A helical membrane pass occupies residues 570 to 590; that stretch reads SLGLTLLTFYYSFAIVGMEFF. Residues 591–630 are Extracellular-facing; that stretch reads NGRLTPNCCNTSTVADAYRFINHTVGNKTKVEEGYYYLNN. The helical; Pore-forming intramembrane region spans 631–654; the sequence is FDNILNSFVTLFELTVVNNWYIIM. Topologically, residues 655–671 are extracellular; that stretch reads EGVTSQTSHWSRLYFMT. A helical membrane pass occupies residues 672–692; that stretch reads FYIVTMVVMTIIVAFILEAFV. At 693–817 the chain is on the cytoplasmic side; that stretch reads FRMNYSRKSQ…GSRQRSQTVT (125 aa). A coiled-coil region spans residues 770–794; sequence SLKMYQEEIQEWYEEHAREQEQQKL. The segment at 785–817 is disordered; that stretch reads HAREQEQQKLRGSVPGPAAQQPPGSRQRSQTVT. Over residues 806–817 the composition is skewed to polar residues; it reads PPGSRQRSQTVT.

It belongs to the calcium channel alpha-1 subunit (TC 1.A.1.11) family. Two pore calcium channel subfamily. As to quaternary structure, dimer. Interacts with MTOR; the interaction is required for TPCN1 ATP sensitivity. Interacts with STX7, STX8 and STX12. Interacts with JPT2. Found in a complex with LSM12, TPCN1 and TPCN2. N-glycosylated. As to expression, mainly expressed in epithelial tissues like lung, kidney, colon, spleen and liver (at protein level).

The protein resides in the lysosome membrane. The protein localises to the endosome membrane. Its subcellular location is the early endosome membrane. It is found in the recycling endosome membrane. It carries out the reaction Na(+)(in) = Na(+)(out). The enzyme catalyses Ca(2+)(in) = Ca(2+)(out). With respect to regulation, na(+) current is inhibited by ATP in a MTORC-dependent manner. ATP sensitivity is independent of PI(3,5)P2. Probably regulated by Mg(2+) ions, cytosolic Mg(2+) selectively inhibits outward current while lysosomal Mg(2+) modestly inhibits both the outward and inward currents. In the absence of Mg(2+), NAADP readily activates TPCN2, with properties similar to PI(3,5)P2. Both current elicited by PI(3,5)P2 as well as NAADP are inhibited by tetrandrine. In terms of biological role, intracellular channel initially characterized as a non-selective Ca(2+)-permeable channel activated by NAADP (nicotinic acid adenine dinucleotide phosphate), it is also a voltage-gated highly-selective Na(+) channel activated directly by PI(3,5)P2 (phosphatidylinositol 3,5-bisphosphate) that senses pH changes and confers electrical excitability to organelles. Localizes to the early and recycling endosomes membranes where it plays a role in the uptake and processing of proteins and regulates organellar membrane excitability, membrane trafficking and pH homeostasis. Ion selectivity is not fixed but rather agonist-dependent and under defined ionic conditions, can be readily activated by both NAADP and PI(3,5)P2. Required for mTOR-dependent nutrient sensing. The polypeptide is Two pore calcium channel protein 1 (Mus musculus (Mouse)).